Here is a 382-residue protein sequence, read N- to C-terminus: Lipid-A-disaccharide synthase (382 aa).

The protein belongs to the LpxB family.

The enzyme catalyses a lipid X + a UDP-2-N,3-O-bis[(3R)-3-hydroxyacyl]-alpha-D-glucosamine = a lipid A disaccharide + UDP + H(+). Its pathway is bacterial outer membrane biogenesis; LPS lipid A biosynthesis. Condensation of UDP-2,3-diacylglucosamine and 2,3-diacylglucosamine-1-phosphate to form lipid A disaccharide, a precursor of lipid A, a phosphorylated glycolipid that anchors the lipopolysaccharide to the outer membrane of the cell. The sequence is that of Lipid-A-disaccharide synthase from Alkalilimnicola ehrlichii (strain ATCC BAA-1101 / DSM 17681 / MLHE-1).